We begin with the raw amino-acid sequence, 111 residues long: MEAKAILRTARISPQKARLVADQVRGLSAERAVNLLKFSDKKAAHLIKKVVESAIANAENNQGADVDELKVKTIMVDEGPSLKRFMARAKGRGTRILKRTSHITVVVGAAK.

This sequence belongs to the universal ribosomal protein uL22 family. Part of the 50S ribosomal subunit.

In terms of biological role, this protein binds specifically to 23S rRNA; its binding is stimulated by other ribosomal proteins, e.g. L4, L17, and L20. It is important during the early stages of 50S assembly. It makes multiple contacts with different domains of the 23S rRNA in the assembled 50S subunit and ribosome. Its function is as follows. The globular domain of the protein is located near the polypeptide exit tunnel on the outside of the subunit, while an extended beta-hairpin is found that lines the wall of the exit tunnel in the center of the 70S ribosome. The polypeptide is Large ribosomal subunit protein uL22 (Xanthomonas euvesicatoria pv. vesicatoria (strain 85-10) (Xanthomonas campestris pv. vesicatoria)).